A 173-amino-acid polypeptide reads, in one-letter code: Transcription factor E (173 aa).

Positions Asn-9–Tyr-92 constitute an HTH TFE/IIEalpha-type domain.

This sequence belongs to the TFE family. As to quaternary structure, monomer. Interaction with RNA polymerase subunits RpoF and RpoE is necessary for Tfe stimulatory transcription activity. Able to interact with Tbp and RNA polymerase in the absence of DNA promoter. Interacts both with the preinitiation and elongation complexes.

Its function is as follows. Transcription factor that plays a role in the activation of archaeal genes transcribed by RNA polymerase. Facilitates transcription initiation by enhancing TATA-box recognition by TATA-box-binding protein (Tbp), and transcription factor B (Tfb) and RNA polymerase recruitment. Not absolutely required for transcription in vitro, but particularly important in cases where Tbp or Tfb function is not optimal. It dynamically alters the nucleic acid-binding properties of RNA polymerases by stabilizing the initiation complex and destabilizing elongation complexes. Seems to translocate with the RNA polymerase following initiation and acts by binding to the non template strand of the transcription bubble in elongation complexes. The protein is Transcription factor E of Methanoregula boonei (strain DSM 21154 / JCM 14090 / 6A8).